We begin with the raw amino-acid sequence, 471 residues long: POU domain protein 2 (471 aa).

Residues 1–18 (CGKSYEEEEEEEDDELEA) show a composition bias toward acidic residues. Disordered stretches follow at residues 1-32 (CGKSYEEEEEEEDDELEADVAQNLSSKRSARQ) and 149-238 (DQQL…PKPL). Over residues 165 to 180 (STPLSKSPLRSPSLSP) the composition is skewed to low complexity. Residues 186–196 (EPQQAQRTPPN) show a composition bias toward polar residues. The span at 197–230 (SLAAAGLGLSSAVLTPNTPSMQQQQQQTMTSTTN) shows a compositional bias: low complexity. In terms of domain architecture, POU-specific spans 257-331 (EETTDLEELE…LLQKWLEDAD (75 aa)). The segment at residues 362-421 (RRKKRTSIETTIRGALEQAFVLNCKPTSEEINQLSERLHMDKEVVRVWFCNRRQKEKRIN) is a DNA-binding region (homeobox).

Belongs to the POU transcription factor family. Class-2 subfamily.

It localises to the nucleus. Functionally, DNA-binding regulatory protein implicated in early development. Involved in neuronal cell fate decision. May act as an octamer-dependent activator of transcription. In Drosophila virilis (Fruit fly), this protein is POU domain protein 2 (pdm2).